The chain runs to 141 residues: Eukaryotic translation initiation factor 1A (141 aa).

Over residues 1–15 (MPKNKGKGGKNRRRG) the composition is skewed to basic residues. The tract at residues 1 to 28 (MPKNKGKGGKNRRRGKNENEQKRELQFK) is disordered. The segment covering 16–28 (KNENEQKRELQFK) has biased composition (basic and acidic residues). Positions 21–95 (QKRELQFKEE…DKADVILRYN (75 aa)) constitute an S1-like domain.

The protein belongs to the eIF-1A family.

Seems to be required for maximal rate of protein biosynthesis. Enhances ribosome dissociation into subunits and stabilizes the binding of the initiator Met-tRNA(I) to 40 S ribosomal subunits. The polypeptide is Eukaryotic translation initiation factor 1A (eif1a) (Dictyostelium discoideum (Social amoeba)).